A 107-amino-acid chain; its full sequence is EMBRYO SURROUNDING FACTOR 1-like protein 5 (107 aa).

A signal peptide spans M1–C22. 4 disulfide bridges follow: C35/C49, C40/C69, C47/C65, and C50/C58. A helical transmembrane segment spans residues G87–L107.

Belongs to the MEG family. In terms of tissue distribution, expressed in flowers.

The protein resides in the membrane. The sequence is that of EMBRYO SURROUNDING FACTOR 1-like protein 5 (ESFL5) from Arabidopsis thaliana (Mouse-ear cress).